We begin with the raw amino-acid sequence, 689 residues long: Methionine--tRNA ligase (689 aa).

The short motif at 15 to 25 (PYANGPIHLGH) is the 'HIGH' region element. Residues Cys146, Cys149, Cys159, and Cys162 each contribute to the Zn(2+) site. The short motif at 332–336 (KMSKS) is the 'KMSKS' region element. An ATP-binding site is contributed by Lys335. The tract at residues 546 to 577 (KDNLQPTEAPKADKKADKKVEKKATTGDPLTD) is disordered. Basic and acidic residues predominate over residues 555–570 (PKADKKADKKVEKKAT). Residues 588–689 (DFAKLDLRIA…QGAKPGMRVK (102 aa)) enclose the tRNA-binding domain.

The protein belongs to the class-I aminoacyl-tRNA synthetase family. MetG type 1 subfamily. As to quaternary structure, homodimer. Requires Zn(2+) as cofactor.

It localises to the cytoplasm. It catalyses the reaction tRNA(Met) + L-methionine + ATP = L-methionyl-tRNA(Met) + AMP + diphosphate. Functionally, is required not only for elongation of protein synthesis but also for the initiation of all mRNA translation through initiator tRNA(fMet) aminoacylation. The protein is Methionine--tRNA ligase of Shewanella denitrificans (strain OS217 / ATCC BAA-1090 / DSM 15013).